The primary structure comprises 356 residues: Holliday junction branch migration complex subunit RuvB (356 aa).

Residues 4–192 (DDTTDATADE…FGFTAHMEFY (189 aa)) are large ATPase domain (RuvB-L). ATP contacts are provided by residues L31, R32, G73, K76, T77, T78, 139 to 141 (EDF), R182, Y192, and R229. Residue T77 participates in Mg(2+) binding. A small ATPAse domain (RuvB-S) region spans residues 193–263 (EPHELERVIH…IAAAALKVYE (71 aa)). Positions 266 to 356 (ARGLDRLDRG…GNGQGDLFGA (91 aa)) are head domain (RuvB-H). Residues R302, R321, and R326 each coordinate DNA.

Belongs to the RuvB family. Homohexamer. Forms an RuvA(8)-RuvB(12)-Holliday junction (HJ) complex. HJ DNA is sandwiched between 2 RuvA tetramers; dsDNA enters through RuvA and exits via RuvB. An RuvB hexamer assembles on each DNA strand where it exits the tetramer. Each RuvB hexamer is contacted by two RuvA subunits (via domain III) on 2 adjacent RuvB subunits; this complex drives branch migration. In the full resolvosome a probable DNA-RuvA(4)-RuvB(12)-RuvC(2) complex forms which resolves the HJ.

The protein resides in the cytoplasm. The catalysed reaction is ATP + H2O = ADP + phosphate + H(+). In terms of biological role, the RuvA-RuvB-RuvC complex processes Holliday junction (HJ) DNA during genetic recombination and DNA repair, while the RuvA-RuvB complex plays an important role in the rescue of blocked DNA replication forks via replication fork reversal (RFR). RuvA specifically binds to HJ cruciform DNA, conferring on it an open structure. The RuvB hexamer acts as an ATP-dependent pump, pulling dsDNA into and through the RuvAB complex. RuvB forms 2 homohexamers on either side of HJ DNA bound by 1 or 2 RuvA tetramers; 4 subunits per hexamer contact DNA at a time. Coordinated motions by a converter formed by DNA-disengaged RuvB subunits stimulates ATP hydrolysis and nucleotide exchange. Immobilization of the converter enables RuvB to convert the ATP-contained energy into a lever motion, pulling 2 nucleotides of DNA out of the RuvA tetramer per ATP hydrolyzed, thus driving DNA branch migration. The RuvB motors rotate together with the DNA substrate, which together with the progressing nucleotide cycle form the mechanistic basis for DNA recombination by continuous HJ branch migration. Branch migration allows RuvC to scan DNA until it finds its consensus sequence, where it cleaves and resolves cruciform DNA. The chain is Holliday junction branch migration complex subunit RuvB from Streptomyces avermitilis (strain ATCC 31267 / DSM 46492 / JCM 5070 / NBRC 14893 / NCIMB 12804 / NRRL 8165 / MA-4680).